We begin with the raw amino-acid sequence, 277 residues long: Pristinamycin IIA synthase subunit B (277 aa).

As to quaternary structure, heterodimer of two subunits, SnaA and SnaB. Requires FMN as cofactor.

Its function is as follows. Catalyzes the oxidation of the proline residue of pristinamycin IIB (PIIB) to pristinamycin IIA (PIIA). The chain is Pristinamycin IIA synthase subunit B (snaB) from Streptomyces pristinaespiralis.